A 359-amino-acid polypeptide reads, in one-letter code: Membrane-bound lytic murein transglycosylase C (359 aa).

Residues 1–16 form the signal peptide; sequence MKKYLALALIAPLLIS. Cys17 is lipidated: N-palmitoyl cysteine. Residue Cys17 is the site of S-diacylglycerol cysteine attachment.

Belongs to the transglycosylase Slt family.

It localises to the cell outer membrane. The enzyme catalyses Exolytic cleavage of the (1-&gt;4)-beta-glycosidic linkage between N-acetylmuramic acid (MurNAc) and N-acetylglucosamine (GlcNAc) residues in peptidoglycan, from either the reducing or the non-reducing ends of the peptidoglycan chains, with concomitant formation of a 1,6-anhydrobond in the MurNAc residue.. Murein-degrading enzyme. May play a role in recycling of muropeptides during cell elongation and/or cell division. The chain is Membrane-bound lytic murein transglycosylase C from Shigella sonnei (strain Ss046).